Consider the following 180-residue polypeptide: Vacuolar ATPase assembly protein VMA22 (180 aa).

The stretch at 16–37 forms a coiled coil; it reads QLLGDLEELEGKRTVLNARVEE. The span at 92-101 shows a compositional bias: basic and acidic residues; that stretch reads EEVGPREAGL. Residues 92–122 are disordered; the sequence is EEVGPREAGLRRRKGPTKTPEPESSEAPQDP. A coiled-coil region spans residues 153 to 176; it reads SLQNRIDWGRSQLRGLQEKLKQLE.

Accessory component of the multisubunit proton-transporting vacuolar (V)-ATPase protein pump. Expressed throughout the brain.

It is found in the endosome. The protein localises to the lysosome. It localises to the endoplasmic reticulum-Golgi intermediate compartment. Its subcellular location is the cytoplasmic vesicle. The protein resides in the COPI-coated vesicle. It is found in the endoplasmic reticulum. Accessory component of the proton-transporting vacuolar (V)-ATPase protein pump involved in intracellular iron homeostasis. In aerobic conditions, required for intracellular iron homeostasis, thus triggering the activity of Fe(2+) prolyl hydroxylase (PHD) enzymes, and leading to HIF1A hydroxylation and subsequent proteasomal degradation. Necessary for endolysosomal acidification and lysosomal degradation. May be involved in Golgi homeostasis. This chain is Vacuolar ATPase assembly protein VMA22, found in Homo sapiens (Human).